Here is a 276-residue protein sequence, read N- to C-terminus: Large ribosomal subunit protein uL2 (276 aa).

Disordered stretches follow at residues 14–58 (RNAS…GGGH) and 221–276 (TRGE…KNRK). Residues 16-27 (ASVSDFSELTRS) show a composition bias toward polar residues. Positions 255-276 (RRPKKASNKMIVRRRPSGKNRK) are enriched in basic residues.

This sequence belongs to the universal ribosomal protein uL2 family. As to quaternary structure, part of the 50S ribosomal subunit. Forms a bridge to the 30S subunit in the 70S ribosome.

One of the primary rRNA binding proteins. Required for association of the 30S and 50S subunits to form the 70S ribosome, for tRNA binding and peptide bond formation. It has been suggested to have peptidyltransferase activity; this is somewhat controversial. Makes several contacts with the 16S rRNA in the 70S ribosome. The sequence is that of Large ribosomal subunit protein uL2 from Bifidobacterium longum subsp. infantis (strain ATCC 15697 / DSM 20088 / JCM 1222 / NCTC 11817 / S12).